The primary structure comprises 695 residues: Lactotransferrin (695 aa).

The signal sequence occupies residues Leu-1–Ala-6. Transferrin-like domains are found at residues Val-12 to Glu-339 and Val-351 to Arg-680. Intrachain disulfides connect Cys-15-Cys-51 and Cys-25-Cys-42. Asp-66 is a Fe(3+) binding site. Residue Lys-79 is part of the active site. Tyr-98 contacts Fe(3+). 5 cysteine pairs are disulfide-bonded: Cys-121–Cys-204, Cys-163–Cys-179, Cys-166–Cys-189, Cys-176–Cys-187, and Cys-237–Cys-251. Hydrogencarbonate contacts are provided by Thr-123, Arg-127, Ala-129, and Gly-130. N-linked (GlcNAc...) asparagine glycosylation is present at Asn-143. Tyr-198 is a Fe(3+) binding site. His-259 provides a ligand contact to Fe(3+). Ser-265 (nucleophile) is an active-site residue. Asn-287 is a glycosylation site (N-linked (GlcNAc...) asparagine). Intrachain disulfides connect Cys-354–Cys-386 and Cys-364–Cys-377. Asp-401 serves as a coordination point for Fe(3+). Intrachain disulfides connect Cys-411/Cys-690, Cys-431/Cys-653, Cys-463/Cys-538, Cys-487/Cys-681, Cys-497/Cys-511, Cys-508/Cys-521, Cys-579/Cys-593, and Cys-631/Cys-636. Position 436 (Pro-436) interacts with D-glucose. Tyr-439 serves as a coordination point for Fe(3+). Hydrogencarbonate is bound by residues Thr-465, Arg-469, Ala-471, and Ala-472. Residue Asn-482 is glycosylated (N-linked (GlcNAc...) asparagine). Tyr-532 provides a ligand contact to Fe(3+). D-glucose is bound at residue Asn-600. A Fe(3+)-binding site is contributed by His-601. Tyr-666 lines the D-glucose pocket.

This sequence belongs to the transferrin family. Monomer. Found in a complex with LTF, CLU, EPPIN and SEMG1. Found in a complex with MPO and LTF; interacts directly with CP, allows Fe(3+) incorporation into LTF and activation of CP ferroxidase activity. Poly-N-acetyllactosaminic carbohydrate moiety seems to be needed for TLR4 activation.

The protein resides in the secreted. The protein localises to the cytoplasmic granule. Its function is as follows. Transferrins are iron binding transport proteins which can bind two Fe(3+) ions in association with the binding of an anion, usually bicarbonate. Functionally, major iron-binding and multifunctional protein found in exocrine fluids such as breast milk and mucosal secretions. Has antimicrobial activity, which depends on the extracellular cation concentration. Antimicrobial properties include bacteriostasis, which is related to its ability to sequester free iron and thus inhibit microbial growth, as well as direct bactericidal properties leading to the release of lipopolysaccharides from the bacterial outer membrane. Can also prevent bacterial biofilm development in P.aeruginosa infection. Has weak antifungal activity against C.albicans. Has anabolic, differentiating and anti-apoptotic effects on osteoblasts and can also inhibit osteoclastogenesis, possibly playing a role in the regulation of bone growth. Promotes binding of species C adenoviruses to epithelial cells, promoting adenovirus infection. Can inhibit papillomavirus infections. Stimulates the TLR4 signaling pathway leading to NF-kappa-B activation and subsequent pro-inflammatory cytokine production while also interfering with the lipopolysaccharide (LPS)-stimulated TLR4 signaling. Inhibits neutrophil granulocyte migration to sites of apoptosis, when secreted by apoptotic cells. Stimulates VEGFA-mediated endothelial cell migration and proliferation. Binds heparin, chondroitin sulfate and possibly other glycosaminoglycans (GAGs). Also binds specifically to pneumococcal surface protein A (PspA), the lipid A portion of bacterial lipopolysaccharide (LPS), lysozyme and DNA. Lactoferricin binds to the bacterial surface and is crucial for the bactericidal functions. Has some antiviral activity against papillomavirus infection. N-terminal region shows strong antifungal activity against C.albicans. Contains two BBXB heparin-binding consensus sequences that appear to form the predominate functional GAG-binding site. In terms of biological role, the lactotransferrin transferrin-like domain 1 functions as a serine protease of the peptidase S60 family that cuts arginine rich regions. This function contributes to the antimicrobial activity. Shows a preferential cleavage at -Arg-Ser-Arg-Arg-|- and -Arg-Arg-Ser-Arg-|-, and of Z-Phe-Arg-|-aminomethylcoumarin sites. In Equus caballus (Horse), this protein is Lactotransferrin (LTF).